The primary structure comprises 107 residues: Ferredoxin-1 (107 aa).

4Fe-4S ferredoxin-type domains lie at 2–30 (AFVV…YEGP) and 31–60 (NFLV…SEDE). Cys-9 and Cys-17 together coordinate [3Fe-4S] cluster. Positions 21, 40, 43, and 46 each coordinate [4Fe-4S] cluster. Cys-50 contributes to the [3Fe-4S] cluster binding site. Positions 84 to 107 (EKKDPLPDAEDWDGVKGKLQHLER) are disordered. Basic and acidic residues predominate over residues 96–107 (DGVKGKLQHLER).

[4Fe-4S] cluster serves as cofactor. It depends on [3Fe-4S] cluster as a cofactor.

Ferredoxins are iron-sulfur proteins that transfer electrons in a wide variety of metabolic reactions. This ferredoxin could play a role in regulating gene expression by interacting directly with DNA. This chain is Ferredoxin-1 (fdxA), found in Azotobacter vinelandii.